The chain runs to 432 residues: ATP-dependent RNA helicase RhlB (432 aa).

Residues 9–37 (QNFADLGLQPQVIDGLNAKGFIKCTPIQA) carry the Q motif motif. Residues 40–219 (LPVLLAGQDI…FEHMQEPEHV (180 aa)) enclose the Helicase ATP-binding domain. 53–60 (AQTGTGKT) lines the ATP pocket. Positions 165 to 168 (DEAD) match the DEAD box motif. The Helicase C-terminal domain occupies 245–390 (ALLQTLIEEE…QSDYDASALL (146 aa)). Positions 396–432 (PLRLQRRPQQNRRNNNGQRQGGNRKHTRPRQPRNTQS) are disordered. A compositionally biased stretch (basic residues) spans 417 to 426 (GNRKHTRPRQ).

The protein belongs to the DEAD box helicase family. RhlB subfamily. As to quaternary structure, component of the RNA degradosome, which is a multiprotein complex involved in RNA processing and mRNA degradation.

It localises to the cytoplasm. The catalysed reaction is ATP + H2O = ADP + phosphate + H(+). Its function is as follows. DEAD-box RNA helicase involved in RNA degradation. Has RNA-dependent ATPase activity and unwinds double-stranded RNA. In Aliivibrio fischeri (strain ATCC 700601 / ES114) (Vibrio fischeri), this protein is ATP-dependent RNA helicase RhlB.